The sequence spans 143 residues: Heat shock protein Hsp-16.41 (143 aa).

Residues 35–140 enclose the sHSP domain; it reads HNSFNFSDNI…SSRSIPINFV (106 aa).

The protein belongs to the small heat shock protein (HSP20) family.

The sequence is that of Heat shock protein Hsp-16.41 (hsp-16.41) from Caenorhabditis elegans.